The following is a 174-amino-acid chain: 3-hydroxydecanoyl-[acyl-carrier-protein] dehydratase (174 aa).

His73 is a catalytic residue.

This sequence belongs to the thioester dehydratase family. FabA subfamily. Homodimer.

Its subcellular location is the cytoplasm. The catalysed reaction is a (3R)-hydroxyacyl-[ACP] = a (2E)-enoyl-[ACP] + H2O. It catalyses the reaction (3R)-hydroxydecanoyl-[ACP] = (2E)-decenoyl-[ACP] + H2O. The enzyme catalyses (2E)-decenoyl-[ACP] = (3Z)-decenoyl-[ACP]. Its pathway is lipid metabolism; fatty acid biosynthesis. Necessary for the introduction of cis unsaturation into fatty acids. Catalyzes the dehydration of (3R)-3-hydroxydecanoyl-ACP to E-(2)-decenoyl-ACP and then its isomerization to Z-(3)-decenoyl-ACP. Can catalyze the dehydratase reaction for beta-hydroxyacyl-ACPs with saturated chain lengths up to 16:0, being most active on intermediate chain length. The polypeptide is 3-hydroxydecanoyl-[acyl-carrier-protein] dehydratase (Cellvibrio japonicus (strain Ueda107) (Pseudomonas fluorescens subsp. cellulosa)).